Consider the following 122-residue polypeptide: C-C motif chemokine 9 (122 aa).

Positions 1 to 21 (MKPFHTALSFLILTTALGIWA) are cleaved as a signal peptide. 3 cysteine pairs are disulfide-bonded: C57–C80, C58–C96, and C67–C107.

This sequence belongs to the intercrine beta (chemokine CC) family. In terms of processing, the N-terminal is proteolytically cleaved by proteases associated with inflammatory responses. The processed forms CCL9(29-101), CCL9(30-101) and CCL9(31-101) exhibit increase in CCR1-mediated signaling and chemotaxis assays in vitro. As to expression, expressed mainly in the liver, lung, and the thymus, although some expression has been detected in a wide variety of tissues except brain.

It localises to the secreted. Its function is as follows. Monokine with inflammatory, pyrogenic and chemokinetic properties. Circulates at high concentrations in the blood of healthy animals. Binding to a high-affinity receptor activates calcium release in neutrophils. It also inhibits colony formation of bone marrow myeloid immature progenitors. In Mus musculus (Mouse), this protein is C-C motif chemokine 9 (Ccl9).